We begin with the raw amino-acid sequence, 189 residues long: ATP synthase subunit b 1 (189 aa).

A helical transmembrane segment spans residues T32 to L52.

The protein belongs to the ATPase B chain family. As to quaternary structure, F-type ATPases have 2 components, F(1) - the catalytic core - and F(0) - the membrane proton channel. F(1) has five subunits: alpha(3), beta(3), gamma(1), delta(1), epsilon(1). F(0) has three main subunits: a(1), b(2) and c(10-14). The alpha and beta chains form an alternating ring which encloses part of the gamma chain. F(1) is attached to F(0) by a central stalk formed by the gamma and epsilon chains, while a peripheral stalk is formed by the delta and b chains.

Its subcellular location is the cell inner membrane. In terms of biological role, f(1)F(0) ATP synthase produces ATP from ADP in the presence of a proton or sodium gradient. F-type ATPases consist of two structural domains, F(1) containing the extramembraneous catalytic core and F(0) containing the membrane proton channel, linked together by a central stalk and a peripheral stalk. During catalysis, ATP synthesis in the catalytic domain of F(1) is coupled via a rotary mechanism of the central stalk subunits to proton translocation. Its function is as follows. Component of the F(0) channel, it forms part of the peripheral stalk, linking F(1) to F(0). In Maricaulis maris (strain MCS10) (Caulobacter maris), this protein is ATP synthase subunit b 1.